A 132-amino-acid chain; its full sequence is L-ectoine synthase (132 aa).

It belongs to the ectoine synthase family.

The catalysed reaction is (2S)-4-acetamido-2-aminobutanoate = L-ectoine + H2O. It functions in the pathway amine and polyamine biosynthesis; ectoine biosynthesis; L-ectoine from L-aspartate 4-semialdehyde: step 3/3. Functionally, catalyzes the circularization of gamma-N-acetyl-alpha,gamma-diaminobutyric acid (ADABA) to ectoine (1,4,5,6-tetrahydro-2-methyl-4-pyrimidine carboxylic acid), which is an excellent osmoprotectant. The sequence is that of L-ectoine synthase from Bordetella avium (strain 197N).